The following is a 460-amino-acid chain: MRQENDSLGIVEVPEDKLYGAQTARSQKYFSWAPEVMPKEVIRALVLIKQCAAKANHDLGFLDSKYCDMIVSAASEILEGGFEEHFPLKVWQTGSGTQSNMNVNEVIANLAIQRHGGVVGSKTPIHPNDHVNKSQSSNDVFPTAMHIAAVINLKKKLIPAMDHLQRALDAKVAEFRDCVKIGRTHLMDAVPMTLGQEFSGYSNQIRQSLERVAFSLTHMYELAIGGTAVGTGLNVPNGFIDKVIHYLRQETGEPFVAASNYFSALSNHDTLVNAHGVLATLACALTKIATDLSFLGSGPRCGLGELLFPENEPGSSIMPGKINPTQCEALQMVCAQVIGNNQAVIMGGSRGNFELNVMKPVIIYNFLQSVDILAGGMQAFADYFVSGLRVNKPRLKEYLDNSLMLVTALTPVLGYDKCSKMALKAFHDNINLKEACIQMGYLSAEEFDRLVVPESMVGKF.

Substrate-binding positions include 95–97 (SGT), 126–129 (HPND), 136–138 (SSN), and Thr-184. His-185 (proton donor/acceptor) is an active-site residue. Ser-315 is an active-site residue. Residues Ser-316 and 321–323 (KIN) contribute to the substrate site.

The protein belongs to the class-II fumarase/aspartase family. Fumarase subfamily. In terms of assembly, homotetramer.

Its subcellular location is the cytoplasm. It catalyses the reaction (S)-malate = fumarate + H2O. Its pathway is carbohydrate metabolism; tricarboxylic acid cycle; (S)-malate from fumarate: step 1/1. Involved in the TCA cycle. Catalyzes the stereospecific interconversion of fumarate to L-malate. This is Fumarate hydratase class II from Chlamydia caviae (strain ATCC VR-813 / DSM 19441 / 03DC25 / GPIC) (Chlamydophila caviae).